A 150-amino-acid polypeptide reads, in one-letter code: 1,4-dihydroxy-2-naphthoyl-CoA hydrolase (150 aa).

The active site involves aspartate 19.

The protein belongs to the 4-hydroxybenzoyl-CoA thioesterase family. DHNA-CoA hydrolase subfamily.

It carries out the reaction 1,4-dihydroxy-2-naphthoyl-CoA + H2O = 1,4-dihydroxy-2-naphthoate + CoA + H(+). The protein operates within cofactor biosynthesis; phylloquinone biosynthesis. It functions in the pathway quinol/quinone metabolism; 1,4-dihydroxy-2-naphthoate biosynthesis; 1,4-dihydroxy-2-naphthoate from chorismate: step 7/7. Catalyzes the hydrolysis of 1,4-dihydroxy-2-naphthoyl-CoA (DHNA-CoA) to 1,4-dihydroxy-2-naphthoate (DHNA), a reaction involved in phylloquinone (vitamin K1) biosynthesis. This is 1,4-dihydroxy-2-naphthoyl-CoA hydrolase from Prochlorococcus marinus (strain AS9601).